The primary structure comprises 611 residues: Methionine--tRNA ligase (611 aa).

Positions 12-22 (PYANGPRHIGH) match the 'HIGH' region motif. Residues Cys-144, Cys-147, Cys-157, and Cys-160 each contribute to the Zn(2+) site. Positions 348–352 (KFSSS) match the 'KMSKS' region motif. Position 351 (Ser-351) interacts with ATP.

It belongs to the class-I aminoacyl-tRNA synthetase family. MetG type 1 subfamily. Monomer. Zn(2+) is required as a cofactor.

It localises to the cytoplasm. The enzyme catalyses tRNA(Met) + L-methionine + ATP = L-methionyl-tRNA(Met) + AMP + diphosphate. Is required not only for elongation of protein synthesis but also for the initiation of all mRNA translation through initiator tRNA(fMet) aminoacylation. This chain is Methionine--tRNA ligase, found in Corynebacterium urealyticum (strain ATCC 43042 / DSM 7109).